The chain runs to 181 residues: MIFMQILEPQEVPSFLMICQRRSPAMHRTCTDHAPLAIAQVWLWVSLAKAGSNRRGPGRAEGTFFSLLAALHAAQHFPNLPTAPGGASQSNIVSPELTPKPTTALKHAECLLDLNSHSLYRKPRPKAAVYLNLSLPLKSVHRLSLKKSFGFGKRDFENNSVFIVDSGGTCAGLLPGYIGWC.

This is an uncharacterized protein from Homo sapiens (Human).